A 46-amino-acid chain; its full sequence is GTP cyclohydrolase 1 (46 aa).

Residue Cys-7 participates in Zn(2+) binding.

Belongs to the GTP cyclohydrolase I family. Homomer.

It carries out the reaction GTP + H2O = 7,8-dihydroneopterin 3'-triphosphate + formate + H(+). Its pathway is cofactor biosynthesis; 7,8-dihydroneopterin triphosphate biosynthesis; 7,8-dihydroneopterin triphosphate from GTP: step 1/1. This chain is GTP cyclohydrolase 1 (folE), found in Bacillus pumilus (Bacillus mesentericus).